The following is a 128-amino-acid chain: Protein ripply2 (128 aa).

A disordered region spans residues 1–63 (MENAGGAEGT…HAAEAMPDGP (63 aa)). Residues 9-22 (GTESGAAACAATDG) are compositionally biased toward low complexity. Positions 37–40 (WRPW) match the WRPW motif motif. The interval 77–112 (HPVRLFWPKSKCYDYLYQEAEALLKNFPIQATISFY) is ripply homology domain.

This sequence belongs to the ripply family.

It localises to the nucleus. Plays a role in somitogenesis. Required for somite segregation and establishment of rostrocaudal polarity in somites. In Homo sapiens (Human), this protein is Protein ripply2 (RIPPLY2).